A 460-amino-acid chain; its full sequence is tRNA modification GTPase MnmE (460 aa).

Residues R29, E89, and R128 each contribute to the (6S)-5-formyl-5,6,7,8-tetrahydrofolate site. The 159-residue stretch at 224–382 (GVPTVIIGKP…LKQNLLEIIQ (159 aa)) folds into the TrmE-type G domain. Residue N234 participates in K(+) binding. GTP is bound by residues 234–239 (NAGKST), 253–259 (SEIAGTT), and 278–281 (DTAG). Residue S238 coordinates Mg(2+). 3 residues coordinate K(+): S253, I255, and T258. T259 contributes to the Mg(2+) binding site. K460 serves as a coordination point for (6S)-5-formyl-5,6,7,8-tetrahydrofolate.

This sequence belongs to the TRAFAC class TrmE-Era-EngA-EngB-Septin-like GTPase superfamily. TrmE GTPase family. As to quaternary structure, homodimer. Heterotetramer of two MnmE and two MnmG subunits. The cofactor is K(+).

The protein resides in the cytoplasm. Exhibits a very high intrinsic GTPase hydrolysis rate. Involved in the addition of a carboxymethylaminomethyl (cmnm) group at the wobble position (U34) of certain tRNAs, forming tRNA-cmnm(5)s(2)U34. The chain is tRNA modification GTPase MnmE from Cytophaga hutchinsonii (strain ATCC 33406 / DSM 1761 / CIP 103989 / NBRC 15051 / NCIMB 9469 / D465).